Consider the following 291-residue polypeptide: tRNA dimethylallyltransferase (291 aa).

Residue 8–15 (GSTASGKT) participates in ATP binding. 10 to 15 (TASGKT) contributes to the substrate binding site. Positions 33–36 (DSLC) are interaction with substrate tRNA.

This sequence belongs to the IPP transferase family. In terms of assembly, monomer. Requires Mg(2+) as cofactor.

The enzyme catalyses adenosine(37) in tRNA + dimethylallyl diphosphate = N(6)-dimethylallyladenosine(37) in tRNA + diphosphate. Its function is as follows. Catalyzes the transfer of a dimethylallyl group onto the adenine at position 37 in tRNAs that read codons beginning with uridine, leading to the formation of N6-(dimethylallyl)adenosine (i(6)A). This is tRNA dimethylallyltransferase from Aliarcobacter butzleri (strain RM4018) (Arcobacter butzleri).